The chain runs to 96 residues: Protein YdfX (96 aa).

The polypeptide is Protein YdfX (ydfX) (Escherichia coli (strain K12)).